We begin with the raw amino-acid sequence, 141 residues long: VLSAABKSBVKAAWGKVGGNAAPYGAZALZRMFLSFPTTKTYFPHFBLSHGSAZVKAHGZKVABALTKAVGHLBBLPGTLSBLSBLHAHKLRVBPVBFKLLSHSLLVTLATHLPBBFTPAVHASLBKFLABVSTVLTSKYR.

One can recognise a Globin domain in the interval 1–141 (VLSAABKSBV…VSTVLTSKYR (141 aa)). The residue at position 3 (S3) is a Phosphoserine. K7 and K11 each carry N6-succinyllysine. K16 carries the N6-acetyllysine; alternate modification. At K16 the chain carries N6-succinyllysine; alternate. A Phosphotyrosine modification is found at Y24. S35 is subject to Phosphoserine. The residue at position 40 (K40) is an N6-succinyllysine. S49 is modified (phosphoserine). H58 serves as a coordination point for O2. Position 87 (H87) interacts with heme b. The residue at position 102 (S102) is a Phosphoserine. T108 bears the Phosphothreonine mark. S124 carries the phosphoserine modification. Phosphothreonine occurs at positions 134 and 137. Phosphoserine is present on S138.

This sequence belongs to the globin family. In terms of assembly, heterotetramer of two alpha chains and two beta chains. As to expression, red blood cells.

In terms of biological role, involved in oxygen transport from the lung to the various peripheral tissues. The sequence is that of Hemoglobin subunit alpha-1/2 from Odocoileus virginianus virginianus (Virginia white-tailed deer).